The chain runs to 171 residues: ATP synthase subunit delta (171 aa).

Belongs to the ATPase delta chain family. As to quaternary structure, F-type ATPases have 2 components, F(1) - the catalytic core - and F(0) - the membrane proton channel. F(1) has five subunits: alpha(3), beta(3), gamma(1), delta(1), epsilon(1). F(0) has three main subunits: a(1), b(2) and c(10-14). The alpha and beta chains form an alternating ring which encloses part of the gamma chain. F(1) is attached to F(0) by a central stalk formed by the gamma and epsilon chains, while a peripheral stalk is formed by the delta and b chains.

The protein resides in the cell membrane. Its function is as follows. F(1)F(0) ATP synthase produces ATP from ADP in the presence of a proton or sodium gradient. F-type ATPases consist of two structural domains, F(1) containing the extramembraneous catalytic core and F(0) containing the membrane proton channel, linked together by a central stalk and a peripheral stalk. During catalysis, ATP synthesis in the catalytic domain of F(1) is coupled via a rotary mechanism of the central stalk subunits to proton translocation. Functionally, this protein is part of the stalk that links CF(0) to CF(1). It either transmits conformational changes from CF(0) to CF(1) or is implicated in proton conduction. The polypeptide is ATP synthase subunit delta (Acholeplasma laidlawii (strain PG-8A)).